We begin with the raw amino-acid sequence, 501 residues long: Probable cytosol aminopeptidase (501 aa).

Residues Lys-272 and Asp-277 each coordinate Mn(2+). The active site involves Lys-284. Residues Asp-295, Asp-354, and Glu-356 each coordinate Mn(2+). Arg-358 is a catalytic residue.

Belongs to the peptidase M17 family. Requires Mn(2+) as cofactor.

It is found in the cytoplasm. It carries out the reaction Release of an N-terminal amino acid, Xaa-|-Yaa-, in which Xaa is preferably Leu, but may be other amino acids including Pro although not Arg or Lys, and Yaa may be Pro. Amino acid amides and methyl esters are also readily hydrolyzed, but rates on arylamides are exceedingly low.. The enzyme catalyses Release of an N-terminal amino acid, preferentially leucine, but not glutamic or aspartic acids.. Presumably involved in the processing and regular turnover of intracellular proteins. Catalyzes the removal of unsubstituted N-terminal amino acids from various peptides. In Buchnera aphidicola subsp. Baizongia pistaciae (strain Bp), this protein is Probable cytosol aminopeptidase.